We begin with the raw amino-acid sequence, 291 residues long: Proline iminopeptidase (291 aa).

The AB hydrolase-1 domain occupies 30 to 274 (LLIHGGPGSS…ANSRHLALLD (245 aa)). Serine 103 (nucleophile) is an active-site residue. The active site involves aspartate 242. The active-site Proton donor is histidine 269.

The protein belongs to the peptidase S33 family.

The protein localises to the cell envelope. It catalyses the reaction Release of N-terminal proline from a peptide.. Releases the N-terminal proline from various substrates. The protein is Proline iminopeptidase of Lacticaseibacillus rhamnosus (strain Lc 705) (Lactobacillus rhamnosus).